The primary structure comprises 1316 residues: Tetratricopeptide repeat protein 21B (1316 aa).

19 TPR repeats span residues 108 to 141 (EKAL…SDGS), 145 to 178 (HVLK…GNDT), 180 to 211 (ALLG…FPSF), 285 to 323 (AQLF…NPQQ), 324 to 357 (SEFA…DETS), 492 to 525 (LQTV…NPSY), 563 to 596 (PLYH…PGMK), 617 to 650 (LSIF…FSGT), 722 to 755 (PRSF…NPKD), 757 to 789 (TLAS…GQKN), 791 to 822 (LCYD…EPVN), 831 to 864 (GRCQ…QARV), 884 to 917 (AEIC…CETD), 919 to 951 (KIML…DQDN), 952 to 985 (EAAT…KPDN), 1023 to 1056 (PGFQ…RDWG), 1197 to 1230 (EKSW…NRSC), 1232 to 1264 (KAYE…SNRT), and 1266 to 1299 (PAVG…HPTY).

Belongs to the TTC21 family. Component of the IFT complex A (IFT-A) complex. IFT-A complex is divided into a core subcomplex composed of IFT122:IFT140:WDR19 which is associated with TULP3 and a peripheral subcomplex composed of IFT43:WDR35:TTC21B. Interacts directy with WDR35 and TTC21B. Interacts with TTC25.

It localises to the cytoplasm. Its subcellular location is the cytoskeleton. The protein resides in the cilium axoneme. Component of the IFT complex A (IFT-A), a complex required for retrograde ciliary transport and entry into cilia of G protein-coupled receptors (GPCRs). Essential for retrograde trafficking of IFT-1, IFT-B and GPCRs. Negatively modulates the SHH signal transduction. The sequence is that of Tetratricopeptide repeat protein 21B from Homo sapiens (Human).